Consider the following 252-residue polypeptide: 14-3-3 protein 10 (252 aa).

This sequence belongs to the 14-3-3 family. Homodimer.

This chain is 14-3-3 protein 10 (TFT10), found in Solanum lycopersicum (Tomato).